Reading from the N-terminus, the 277-residue chain is Adenylate kinase (277 aa).

72-77 (GAGKGT) is a binding site for ATP. Positions 92–121 (ATGDMLRSQVAKQTALGVQAKKIMDQGGLV) are NMP. AMP-binding positions include Thr-93, Arg-98, 119-121 (GLV), 148-151 (GFPR), and Gln-155. Positions 189–226 (GRLVHPASGRSYHKLFNPPKVAMTDDVTGDPLVQRSDD) are LID. ATP is bound by residues Arg-190 and 199–200 (SY). Arg-223 and Arg-234 together coordinate AMP. Residue Gln-262 participates in ATP binding.

It belongs to the adenylate kinase family. AK2 subfamily. Monomer.

The protein resides in the cytoplasm. Its subcellular location is the cytosol. It localises to the mitochondrion intermembrane space. The catalysed reaction is AMP + ATP = 2 ADP. In terms of biological role, catalyzes the reversible transfer of the terminal phosphate group between ATP and AMP. Plays an important role in cellular energy homeostasis and in adenine nucleotide metabolism. Adenylate kinase activity is critical for regulation of the phosphate utilization and the AMP de novo biosynthesis pathways. The protein is Adenylate kinase of Eremothecium gossypii (strain ATCC 10895 / CBS 109.51 / FGSC 9923 / NRRL Y-1056) (Yeast).